Consider the following 208-residue polypeptide: Protein-L-isoaspartate O-methyltransferase (208 aa).

Residue Ser-59 is part of the active site.

It belongs to the methyltransferase superfamily. L-isoaspartyl/D-aspartyl protein methyltransferase family.

It is found in the cytoplasm. The enzyme catalyses [protein]-L-isoaspartate + S-adenosyl-L-methionine = [protein]-L-isoaspartate alpha-methyl ester + S-adenosyl-L-homocysteine. Functionally, catalyzes the methyl esterification of L-isoaspartyl residues in peptides and proteins that result from spontaneous decomposition of normal L-aspartyl and L-asparaginyl residues. It plays a role in the repair and/or degradation of damaged proteins. This chain is Protein-L-isoaspartate O-methyltransferase, found in Vibrio vulnificus (strain CMCP6).